Reading from the N-terminus, the 410-residue chain is Digeranylgeranylglycerophospholipid reductase (410 aa).

FAD is bound by residues alanine 15, glutamate 34, valine 118, aspartate 286, glycine 298, and isoleucine 299. Residues lysine 343 and alanine 379 each contribute to the a 2,3-bis-O-(geranylgeranyl)-sn-glycerol 1-phospholipid site.

Belongs to the geranylgeranyl reductase family. DGGGPL reductase subfamily. FAD serves as cofactor.

The catalysed reaction is a 2,3-bis-O-phytanyl-sn-glycerol 1-phospholipid + 8 A = a 2,3-bis-O-(geranylgeranyl)-sn-glycerol 1-phospholipid + 8 AH2. It carries out the reaction 2,3-bis-O-(phytanyl)-sn-glycerol 1-phosphate + 8 A = 2,3-bis-O-(geranylgeranyl)-sn-glycerol 1-phosphate + 8 AH2. It catalyses the reaction CDP-2,3-bis-O-(geranylgeranyl)-sn-glycerol + 8 AH2 = CDP-2,3-bis-O-(phytanyl)-sn-glycerol + 8 A. The enzyme catalyses archaetidylserine + 8 AH2 = 2,3-bis-O-phytanyl-sn-glycero-3-phospho-L-serine + 8 A. It participates in membrane lipid metabolism; glycerophospholipid metabolism. Is involved in the reduction of 2,3-digeranylgeranylglycerophospholipids (unsaturated archaeols) into 2,3-diphytanylglycerophospholipids (saturated archaeols) in the biosynthesis of archaeal membrane lipids. Can fully reduce the unsaturated isoprenoid side chains of membrane phospholipids and glycolipids. Is also able to reduce the omega-position isoprene of dolichol phosphate. In Haloferax volcanii (strain ATCC 29605 / DSM 3757 / JCM 8879 / NBRC 14742 / NCIMB 2012 / VKM B-1768 / DS2) (Halobacterium volcanii), this protein is Digeranylgeranylglycerophospholipid reductase.